A 1361-amino-acid chain; its full sequence is DNA-directed RNA polymerase subunit beta (1361 aa).

The protein belongs to the RNA polymerase beta chain family. The RNAP catalytic core consists of 2 alpha, 1 beta, 1 beta' and 1 omega subunit. When a sigma factor is associated with the core the holoenzyme is formed, which can initiate transcription.

It catalyses the reaction RNA(n) + a ribonucleoside 5'-triphosphate = RNA(n+1) + diphosphate. Its function is as follows. DNA-dependent RNA polymerase catalyzes the transcription of DNA into RNA using the four ribonucleoside triphosphates as substrates. This chain is DNA-directed RNA polymerase subunit beta, found in Dichelobacter nodosus (strain VCS1703A).